Here is a 168-residue protein sequence, read N- to C-terminus: Bifunctional protein PyrR (168 aa).

Substrate is bound by residues T36–G37, R77, D94–T102, and V151. A PRPP-binding motif is present at residues L90–T102.

Belongs to the purine/pyrimidine phosphoribosyltransferase family. PyrR subfamily.

The enzyme catalyses UMP + diphosphate = 5-phospho-alpha-D-ribose 1-diphosphate + uracil. Functionally, regulates the transcription of the pyrimidine nucleotide (pyr) operon in response to exogenous pyrimidines. In terms of biological role, also displays a weak uracil phosphoribosyltransferase activity which is not physiologically significant. The polypeptide is Bifunctional protein PyrR (Pseudomonas fluorescens).